The primary structure comprises 78 residues: Delta-conotoxin-like TxMKLT1-0111 (78 aa).

The first 22 residues, 1-22 (MKLTCMMIVAVLFLTAWTFATA), serve as a signal peptide directing secretion. A propeptide spanning residues 23-49 (DDSGNGLENLFSNAHHQMKNPEASKLN) is cleaved from the precursor. Cystine bridges form between cysteine 53–cysteine 68, cysteine 60–cysteine 72, and cysteine 67–cysteine 77.

This sequence belongs to the conotoxin O1 superfamily. In terms of tissue distribution, expressed by the venom duct.

Its subcellular location is the secreted. Functionally, delta-conotoxins bind to site 6 of voltage-gated sodium channels (Nav) and inhibit the inactivation process. The polypeptide is Delta-conotoxin-like TxMKLT1-0111 (Conus textile (Cloth-of-gold cone)).